The primary structure comprises 1526 residues: Cell wall protein IFF4 (1526 aa).

Positions 1–20 (MKFLQKFIITVALLTNIVFA) are cleaved as a signal peptide. 2 N-linked (GlcNAc...) asparagine glycosylation sites follow: Asn93 and Asn498. Residues 512-541 (SSAGGSSFPEETHMLQTSDSDLSSTAGSES) are disordered. Residues 525 to 541 (MLQTSDSDLSSTAGSES) show a composition bias toward polar residues. A glycan (N-linked (GlcNAc...) asparagine) is linked at Asn637. The interval 1180–1207 (WNGAKSDSPHTSESDITSQYNSHSTSVA) is disordered. Residues 1193–1207 (SDITSQYNSHSTSVA) show a composition bias toward polar residues. N-linked (GlcNAc...) asparagine glycosylation is found at Asn1451, Asn1463, Asn1479, Asn1502, and Asn1506. Positions 1455–1483 (SSVSGYPTNRSDSNGYANTPTTGSNTSGD) are disordered. Residue Asn1502 is the site of GPI-anchor amidated asparagine attachment. A propeptide spans 1503–1526 (GSTNISNKYLKFLGTVVSILILLI) (removed in mature form).

It belongs to the HYR1/IFF family. Post-translationally, the GPI-anchor is attached to the protein in the endoplasmic reticulum and serves to target the protein to the cell surface. There, the glucosamine-inositol phospholipid moiety is cleaved off and the GPI-$modified mannoprotein is covalently attached via its lipidless GPI glycan remnant to the 1,6-beta-glucan of the outer cell wall layer.

It is found in the secreted. Its subcellular location is the cell wall. The protein localises to the membrane. GPI-anchored cell wall protein involved in cell wall organization, hyphal growth, as well as in host-fungal interaction and virulence. Plays a role in adherence to plastic and to host epithelial cells. Promotes the tissue fungal burden during murine vaginal candidiasis. Also increases susceptibility to neutrophil-mediated killing. Furthermore, contributes to the severity of hematogenously disseminated candidiasis in normal mice, but not in neutropenic mice. The chain is Cell wall protein IFF4 (IFF4) from Candida albicans (strain SC5314 / ATCC MYA-2876) (Yeast).